We begin with the raw amino-acid sequence, 888 residues long: Leukocyte tyrosine kinase receptor (888 aa).

A signal peptide spans 1 to 16 (MGCSHRLLLWLGAAGT). Over 17–421 (ILCSNSEFQT…CMDLPTTASP (405 aa)) the chain is Extracellular. Cystine bridges form between C73-C86 and C168-C179. The disordered stretch occupies residues 226–294 (LVAAGGGGRS…RSPREGAEGG (69 aa)). Over residues 260–273 (GSGGRGGAAGGGSG) the composition is skewed to gly residues. The cysteines at positions 297 and 319 are disulfide-linked. N-linked (GlcNAc...) asparagine glycans are attached at residues N377 and N409. A helical transmembrane segment spans residues 422 to 446 (LILMGAVVAALALSLLMMCAVLILV). Topologically, residues 447 to 888 (NQKCQGLWGT…SSSSSIPGIQ (442 aa)) are cytoplasmic. The Protein kinase domain maps to 506–782 (VTLLRALGHG…IQYCTQDPDV (277 aa)). ATP is bound by residues 512 to 520 (LGHGAFGEV) and K540. D639 (proton acceptor) is an active-site residue. Position 672 is a phosphotyrosine; by autocatalysis (Y672). Residues 857-888 (TYGSWTPRGPQGEDTGIEHCNGSSSSSIPGIQ) form a disordered region. The span at 877–888 (NGSSSSSIPGIQ) shows a compositional bias: polar residues.

It belongs to the protein kinase superfamily. Tyr protein kinase family. Insulin receptor subfamily. Homodimer; homodimerizes following ligand-binding. Part of a complex including LTK, TNK2 and GRB2, in which GRB2 promotes LTK recruitment by TNK2. In terms of processing, phosphorylated at tyrosine residues by autocatalysis, which activates kinase activity. In terms of tissue distribution, subsets of lymphoid and neuronal cells.

Its subcellular location is the cell membrane. The protein resides in the endoplasmic reticulum. It carries out the reaction L-tyrosyl-[protein] + ATP = O-phospho-L-tyrosyl-[protein] + ADP + H(+). Activated by ligand-binding, leading to homodimerization and autophosphorylation. Its function is as follows. Receptor with a tyrosine-protein kinase activity. Following activation by ALKAL1 or ALKAL2 ligands at the cell surface, transduces an extracellular signal into an intracellular response. Ligand-binding to the extracellular domain induces tyrosine kinase activation, leading to activation of the mitogen-activated protein kinase (MAPK) pathway. Phosphorylates almost exclusively at the first tyrosine of the Y-x-x-x-Y-Y motif. The exact function of this protein is not known; studies with chimeric proteins demonstrate its ability to promote growth and specifically neurite outgrowth, and cell survival. Involved in regulation of the secretory pathway involving endoplasmic reticulum (ER) export sites (ERESs) and ER to Golgi transport. The sequence is that of Leukocyte tyrosine kinase receptor from Mus musculus (Mouse).